The chain runs to 178 residues: UPF0114 protein HPSH_00970 (178 aa).

Transmembrane regions (helical) follow at residues 15-35, 54-74, 102-122, and 145-165; these read WLLAPLCIAMSLVLVVLGYVF, LVLSALGLVDLLFMAGLVLMV, FNALKLKVSLSIVAISAIFLL, and PIFWQVVIHLVFVCSALLAAV.

Belongs to the UPF0114 family.

It is found in the cell membrane. The sequence is that of UPF0114 protein HPSH_00970 from Helicobacter pylori (strain Shi470).